Here is a 33-residue protein sequence, read N- to C-terminus: Brevinin-2Rk (33 aa).

Cys27 and Cys33 form a disulfide bridge.

Expressed by the skin glands.

It localises to the secreted. Functionally, antimicrobial peptide. This is Brevinin-2Rk from Pelophylax ridibundus (Marsh frog).